Consider the following 170-residue polypeptide: F1 capsule antigen (170 aa).

The signal sequence occupies residues 1–21 (MKKISSVIAIALFGTIATANA). The tract at residues 100–150 (GNNHQFTTKVIGKDSRDFDISPKVNGENLVGDDVVLATGSQDFFVRSIGSK) is contains potential antigenic determinants that may stimulate T-cells.

It is found in the secreted. Its subcellular location is the capsule. The polypeptide is F1 capsule antigen (caf1) (Yersinia pestis).